The primary structure comprises 994 residues: Regulator of telomere elongation helicase 1 homolog (994 aa).

The Helicase ATP-binding domain occupies 15–324; sequence SKTSIKFPFE…KLIENLRTED (310 aa). 50 to 57 serves as a coordination point for ATP; that stretch reads SPTGTGKT. [4Fe-4S] cluster is bound by residues C142, C160, C169, and C208. The DEAH box motif lies at 251-254; sequence DEAH. The segment covering 818 to 831 has biased composition (basic and acidic residues); the sequence is KIEKKEKIEPRPIK. The tract at residues 818 to 896 is disordered; sequence KIEKKEKIEP…HVVSGSEPPK (79 aa). The span at 833–844 shows a compositional bias: polar residues; sequence DSSSSSVFSLPT. A compositionally biased stretch (basic and acidic residues) spans 847-856; that stretch reads DELKVKKWEQ. 2 stretches are compositionally biased toward polar residues: residues 859–869 and 880–889; these read DSQTNVSSSSD and PGNSSGQHVV.

It belongs to the helicase family. RAD3/XPD subfamily.

The protein resides in the nucleus. The catalysed reaction is ATP + H2O = ADP + phosphate + H(+). Functionally, a probable ATP-dependent DNA helicase implicated in DNA repair and the maintenance of genomic stability. Acts as an anti-recombinase to counteract toxic recombination and limit crossover during meiosis. Regulates meiotic recombination and crossover homeostasis by physically dissociating strand invasion events and thereby promotes noncrossover repair by meiotic synthesis dependent strand annealing (SDSA) as well as disassembly of D loop recombination intermediates. This Caenorhabditis briggsae protein is Regulator of telomere elongation helicase 1 homolog.